We begin with the raw amino-acid sequence, 156 residues long: Small ribosomal subunit protein uS7 (156 aa).

This sequence belongs to the universal ribosomal protein uS7 family. As to quaternary structure, part of the 30S ribosomal subunit. Contacts proteins S9 and S11.

One of the primary rRNA binding proteins, it binds directly to 16S rRNA where it nucleates assembly of the head domain of the 30S subunit. Is located at the subunit interface close to the decoding center, probably blocks exit of the E-site tRNA. The chain is Small ribosomal subunit protein uS7 from Chromohalobacter salexigens (strain ATCC BAA-138 / DSM 3043 / CIP 106854 / NCIMB 13768 / 1H11).